Here is a 634-residue protein sequence, read N- to C-terminus: RING finger protein 207 (634 aa).

An RING-type zinc finger spans residues 25-63 (CHLCQEQYEHPCLLDCYHTFCASCLRGRVADSRLTCPVC). The B box-type; atypical zinc-finger motif lies at 93–145 (EETVQCANCDLECKKQDVDAMYYCNTCCQPLCRDCRETTHKAKMFSRHEIVSL). The Zn(2+) site is built by Cys98, Cys101, Cys127, and His132. The segment at 575 to 634 (YEDSTSTADTQPSNELSCNTEDNWTLNSLSEETNPKNKDYYRTNKQKNTTDSTNRKEIPM) is disordered. Residues 577 to 606 (DSTSTADTQPSNELSCNTEDNWTLNSLSEE) are compositionally biased toward polar residues. Residues 607 to 616 (TNPKNKDYYR) show a composition bias toward basic and acidic residues.

It localises to the cytoplasm. In terms of biological role, plays a role in cardiac repolarization possibly by stabilizing membrane expression of the potassium channel kcnh6a/zerg, or by assisting its synthesis, folding or export from the endoplasmic reticulum, in a heat shock protein-dependent manner. In Danio rerio (Zebrafish), this protein is RING finger protein 207 (rnf207b).